Consider the following 364-residue polypeptide: 3-isopropylmalate dehydrogenase (364 aa).

76-89 (GPKWEKLPPNEQPE) lines the NAD(+) pocket. Residues Arg-97, Arg-107, Arg-136, and Asp-225 each contribute to the substrate site. Residues Asp-225, Asp-249, and Asp-253 each contribute to the Mg(2+) site. 283-295 (GSAPDIAGKGIAN) contacts NAD(+).

The protein belongs to the isocitrate and isopropylmalate dehydrogenases family. LeuB type 1 subfamily. In terms of assembly, homodimer. Mg(2+) serves as cofactor. Mn(2+) is required as a cofactor.

The protein localises to the cytoplasm. It carries out the reaction (2R,3S)-3-isopropylmalate + NAD(+) = 4-methyl-2-oxopentanoate + CO2 + NADH. Its pathway is amino-acid biosynthesis; L-leucine biosynthesis; L-leucine from 3-methyl-2-oxobutanoate: step 3/4. Its function is as follows. Catalyzes the oxidation of 3-carboxy-2-hydroxy-4-methylpentanoate (3-isopropylmalate) to 3-carboxy-4-methyl-2-oxopentanoate. The product decarboxylates to 4-methyl-2 oxopentanoate. This chain is 3-isopropylmalate dehydrogenase, found in Shewanella oneidensis (strain ATCC 700550 / JCM 31522 / CIP 106686 / LMG 19005 / NCIMB 14063 / MR-1).